A 38-amino-acid chain; its full sequence is Cytochrome b6-f complex subunit 5 (38 aa).

A helical transmembrane segment spans residues 5–25 (LLLGIVLGLIPVTLAGLFVAA).

The protein belongs to the PetG family. As to quaternary structure, the 4 large subunits of the cytochrome b6-f complex are cytochrome b6, subunit IV (17 kDa polypeptide, PetD), cytochrome f and the Rieske protein, while the 4 small subunits are PetG, PetL, PetM and PetN. The complex functions as a dimer.

It localises to the cellular thylakoid membrane. Its function is as follows. Component of the cytochrome b6-f complex, which mediates electron transfer between photosystem II (PSII) and photosystem I (PSI), cyclic electron flow around PSI, and state transitions. PetG is required for either the stability or assembly of the cytochrome b6-f complex. In Synechocystis sp. (strain ATCC 27184 / PCC 6803 / Kazusa), this protein is Cytochrome b6-f complex subunit 5.